The chain runs to 254 residues: 3-deoxy-manno-octulosonate cytidylyltransferase (254 aa).

The protein belongs to the KdsB family.

It localises to the cytoplasm. It carries out the reaction 3-deoxy-alpha-D-manno-oct-2-ulosonate + CTP = CMP-3-deoxy-beta-D-manno-octulosonate + diphosphate. The protein operates within nucleotide-sugar biosynthesis; CMP-3-deoxy-D-manno-octulosonate biosynthesis; CMP-3-deoxy-D-manno-octulosonate from 3-deoxy-D-manno-octulosonate and CTP: step 1/1. It participates in bacterial outer membrane biogenesis; lipopolysaccharide biosynthesis. Functionally, activates KDO (a required 8-carbon sugar) for incorporation into bacterial lipopolysaccharide in Gram-negative bacteria. This chain is 3-deoxy-manno-octulosonate cytidylyltransferase, found in Pseudomonas aeruginosa (strain UCBPP-PA14).